We begin with the raw amino-acid sequence, 248 residues long: Pyridoxine 5'-phosphate synthase (248 aa).

Position 12 (N12) interacts with 3-amino-2-oxopropyl phosphate. 14-15 (DH) provides a ligand contact to 1-deoxy-D-xylulose 5-phosphate. R23 serves as a coordination point for 3-amino-2-oxopropyl phosphate. Catalysis depends on H48, which acts as the Proton acceptor. 2 residues coordinate 1-deoxy-D-xylulose 5-phosphate: R50 and H55. E75 serves as the catalytic Proton acceptor. T105 provides a ligand contact to 1-deoxy-D-xylulose 5-phosphate. H199 serves as the catalytic Proton donor. Residues G200 and 221 to 222 (GH) each bind 3-amino-2-oxopropyl phosphate.

The protein belongs to the PNP synthase family. As to quaternary structure, homooctamer; tetramer of dimers.

It is found in the cytoplasm. The catalysed reaction is 3-amino-2-oxopropyl phosphate + 1-deoxy-D-xylulose 5-phosphate = pyridoxine 5'-phosphate + phosphate + 2 H2O + H(+). The protein operates within cofactor biosynthesis; pyridoxine 5'-phosphate biosynthesis; pyridoxine 5'-phosphate from D-erythrose 4-phosphate: step 5/5. Functionally, catalyzes the complicated ring closure reaction between the two acyclic compounds 1-deoxy-D-xylulose-5-phosphate (DXP) and 3-amino-2-oxopropyl phosphate (1-amino-acetone-3-phosphate or AAP) to form pyridoxine 5'-phosphate (PNP) and inorganic phosphate. This Jannaschia sp. (strain CCS1) protein is Pyridoxine 5'-phosphate synthase.